The sequence spans 508 residues: Maturase K (508 aa).

Belongs to the intron maturase 2 family. MatK subfamily.

The protein localises to the plastid. The protein resides in the chloroplast. In terms of biological role, usually encoded in the trnK tRNA gene intron. Probably assists in splicing its own and other chloroplast group II introns. In Pelargonium hortorum (Common geranium), this protein is Maturase K.